A 277-amino-acid polypeptide reads, in one-letter code: Putative pyruvate, phosphate dikinase regulatory protein (277 aa).

Position 151 to 158 (151 to 158) interacts with ADP; it reads GISRTSKT.

The protein belongs to the pyruvate, phosphate/water dikinase regulatory protein family. PDRP subfamily.

The catalysed reaction is N(tele)-phospho-L-histidyl/L-threonyl-[pyruvate, phosphate dikinase] + ADP = N(tele)-phospho-L-histidyl/O-phospho-L-threonyl-[pyruvate, phosphate dikinase] + AMP + H(+). It catalyses the reaction N(tele)-phospho-L-histidyl/O-phospho-L-threonyl-[pyruvate, phosphate dikinase] + phosphate + H(+) = N(tele)-phospho-L-histidyl/L-threonyl-[pyruvate, phosphate dikinase] + diphosphate. Its function is as follows. Bifunctional serine/threonine kinase and phosphorylase involved in the regulation of the pyruvate, phosphate dikinase (PPDK) by catalyzing its phosphorylation/dephosphorylation. This Alkaliphilus metalliredigens (strain QYMF) protein is Putative pyruvate, phosphate dikinase regulatory protein.